Consider the following 397-residue polypeptide: Argininosuccinate synthase (397 aa).

Residue 8 to 16 (AYSGGLDTS) coordinates ATP. Positions 86 and 91 each coordinate L-citrulline. ATP is bound at residue Gly116. L-aspartate contacts are provided by Thr118, Asn122, and Asp123. Asn122 contacts L-citrulline. Residues Arg126, Ser175, Ser184, Glu260, and Tyr272 each coordinate L-citrulline.

Belongs to the argininosuccinate synthase family. Type 1 subfamily. In terms of assembly, homotetramer.

The protein localises to the cytoplasm. The enzyme catalyses L-citrulline + L-aspartate + ATP = 2-(N(omega)-L-arginino)succinate + AMP + diphosphate + H(+). It participates in amino-acid biosynthesis; L-arginine biosynthesis; L-arginine from L-ornithine and carbamoyl phosphate: step 2/3. The sequence is that of Argininosuccinate synthase from Clostridium botulinum (strain Kyoto / Type A2).